Consider the following 183-residue polypeptide: Protein SHI RELATED SEQUENCE 6 (183 aa).

Zn(2+) is bound by residues cysteine 41, cysteine 44, cysteine 52, cysteine 57, cysteine 61, and cysteine 68. The zn(2)-C6 fungal-type; degenerate DNA-binding region spans 41–68 (CRDCGNRAKKECLFERCRTCCKSRGYNC). A compositionally biased stretch (low complexity) spans 79-88 (SSATRSSSSP). Residues 79–121 (SSATRSSSSPSERKKKLKIDKQSSPNVSLLPTTTSRQERGFRE) are disordered. Over residues 100–113 (QSSPNVSLLPTTTS) the composition is skewed to polar residues. Residues 157–160 (ISGH) carry the Required for homo- and heterodimerization motif.

It belongs to the SHI protein family.

The protein localises to the nucleus. Functionally, transcription activator that binds DNA on 5'-ACTCTAC-3' and promotes auxin homeostasis-regulating gene expression (e.g. YUC genes), as well as genes affecting stamen development, cell expansion and timing of flowering. Synergistically with other SHI-related proteins, regulates gynoecium, stamen and leaf development in a dose-dependent manner, controlling apical-basal patterning. Promotes style and stigma formation, and influences vascular development during gynoecium development. May also have a role in the formation and/or maintenance of the shoot apical meristem (SAM). The polypeptide is Protein SHI RELATED SEQUENCE 6 (SRS6) (Arabidopsis thaliana (Mouse-ear cress)).